A 250-amino-acid polypeptide reads, in one-letter code: tRNA (guanine-N(1)-)-methyltransferase (250 aa).

S-adenosyl-L-methionine contacts are provided by residues Gly-108 and 127–132 (LGDFVL).

Belongs to the RNA methyltransferase TrmD family. Homodimer.

The protein localises to the cytoplasm. It carries out the reaction guanosine(37) in tRNA + S-adenosyl-L-methionine = N(1)-methylguanosine(37) in tRNA + S-adenosyl-L-homocysteine + H(+). Functionally, specifically methylates guanosine-37 in various tRNAs. This Streptococcus agalactiae serotype Ia (strain ATCC 27591 / A909 / CDC SS700) protein is tRNA (guanine-N(1)-)-methyltransferase.